A 230-amino-acid polypeptide reads, in one-letter code: Cytidylate kinase (230 aa).

12-20 (GPSGAGKGT) lines the ATP pocket.

The protein belongs to the cytidylate kinase family. Type 1 subfamily.

Its subcellular location is the cytoplasm. It catalyses the reaction CMP + ATP = CDP + ADP. It carries out the reaction dCMP + ATP = dCDP + ADP. The sequence is that of Cytidylate kinase from Yersinia pseudotuberculosis serotype O:1b (strain IP 31758).